The primary structure comprises 932 residues: Protocadherin gamma-A8 (932 aa).

Residues 1–29 (MAAPQSRPRRGELILLCALLGTLWEIGRG) form the signal peptide. 6 consecutive Cadherin domains span residues 30-133 (QIRY…NPKF), 134-242 (QVED…APVF), 243-347 (PHPI…RPEV), 348-452 (IITS…PPTF), 453-562 (PHAS…APEI), and 570-682 (DGST…KPSV). The Extracellular segment spans residues 30 to 692 (QIRYSVPEET…DPNDSSLTLY (663 aa)). Asn47 is a glycosylation site (N-linked (GlcNAc...) asparagine). 3 N-linked (GlcNAc...) asparagine glycosylation sites follow: Asn414, Asn419, and Asn545. An N-linked (GlcNAc...) asparagine glycan is attached at Asn685. Residues 693–713 (LVVAVAAISCVFLAFVAVLLG) form a helical membrane-spanning segment. Residues 714–932 (LRLRRWHKSR…KKKSGKKEKK (219 aa)) are Cytoplasmic-facing. Disordered regions lie at residues 804 to 841 (ADHG…WPNN) and 902 to 932 (ATLT…KEKK). A compositionally biased stretch (polar residues) spans 810–841 (APPNTDWRFSQAQRPGTSGSQNGDDTGTWPNN). Residues 922 to 932 (NKKKSGKKEKK) are compositionally biased toward basic residues.

Its subcellular location is the cell membrane. Functionally, potential calcium-dependent cell-adhesion protein. May be involved in the establishment and maintenance of specific neuronal connections in the brain. This Homo sapiens (Human) protein is Protocadherin gamma-A8 (PCDHGA8).